The primary structure comprises 73 residues: Alternative prion protein (73 aa).

A helical transmembrane segment spans residues 32 to 52 (WWWLGAASWWWLGAAPWWWLG).

Detected in brain homogenate, primary neurons, and peripheral blood mononuclear cells (at protein level).

It is found in the mitochondrion outer membrane. The chain is Alternative prion protein (PRNP) from Homo sapiens (Human).